A 355-amino-acid chain; its full sequence is Aurora kinase (355 aa).

The region spanning 89–340 (FEIGKPLGKG…LEQVMRHPWI (252 aa)) is the Protein kinase domain. ATP contacts are provided by residues 95-103 (LGKGKFGRV) and K118. The active-site Proton acceptor is the D212.

It belongs to the protein kinase superfamily. Ser/Thr protein kinase family. Aurora subfamily. Component of the CPC complex at least composed of ark1, bir1 and pic1. Interacts with the mitotic checkpoint complex (MCC) subunit mad3.

It is found in the nucleus. Its subcellular location is the cytoplasm. The protein localises to the cytoskeleton. The protein resides in the spindle. It carries out the reaction L-seryl-[protein] + ATP = O-phospho-L-seryl-[protein] + ADP + H(+). The catalysed reaction is L-threonyl-[protein] + ATP = O-phospho-L-threonyl-[protein] + ADP + H(+). Functionally, component of the chromosomal passenger complex (CPC), a complex that acts as a key regulator of chromosome segregation and cytokinesis. Has a role in error-correction of aberrent kinetochore-microtubule attachments to ensure that sister kinetochores become bioriented and connect to opposite poles by promoting spindle assembly checkpoint signaling. Ark1 is also required for phosphorylation of histone H3 that accompanies chromosome condensation and condensin recruitment to mitotic chromatin. The polypeptide is Aurora kinase (ark1) (Schizosaccharomyces pombe (strain 972 / ATCC 24843) (Fission yeast)).